A 382-amino-acid chain; its full sequence is Pyrimidine monooxygenase RutA (382 aa).

FMN-binding positions include 68-69, Asn134, Glu143, 159-160, and Ser209; these read IK and RY.

It belongs to the NtaA/SnaA/DszA monooxygenase family. RutA subfamily.

The enzyme catalyses uracil + FMNH2 + NADH + O2 = (Z)-3-ureidoacrylate + FMN + NAD(+) + H2O + H(+). It carries out the reaction thymine + FMNH2 + NADH + O2 = (Z)-2-methylureidoacrylate + FMN + NAD(+) + H2O + H(+). Catalyzes the pyrimidine ring opening between N-3 and C-4 by an unusual flavin hydroperoxide-catalyzed mechanism, adding oxygen atoms in the process to yield ureidoacrylate peracid, that immediately reacts with FMN forming ureidoacrylate and FMN-N(5)-oxide. The FMN-N(5)-oxide reacts spontaneously with NADH to produce FMN. Requires the flavin reductase RutF to regenerate FMN in vivo. In Escherichia coli (strain K12 / MC4100 / BW2952), this protein is Pyrimidine monooxygenase RutA.